The following is a 260-amino-acid chain: Exosome complex component Rrp42 (260 aa).

The protein belongs to the RNase PH family. Rrp42 subfamily. As to quaternary structure, component of the archaeal exosome complex. Forms a hexameric ring-like arrangement composed of 3 Rrp41-Rrp42 heterodimers. The hexameric ring associates with a trimer of Rrp4 and/or Csl4 subunits.

It is found in the cytoplasm. In terms of biological role, non-catalytic component of the exosome, which is a complex involved in RNA degradation. Contributes to the structuring of the Rrp41 active site. This is Exosome complex component Rrp42 from Thermoplasma acidophilum (strain ATCC 25905 / DSM 1728 / JCM 9062 / NBRC 15155 / AMRC-C165).